A 504-amino-acid polypeptide reads, in one-letter code: Cytochrome P450 2D9 (504 aa).

Residue serine 249 is modified to Phosphoserine. Cysteine 446 is a heme binding site.

The protein belongs to the cytochrome P450 family. It depends on heme as a cofactor.

It localises to the endoplasmic reticulum membrane. It is found in the microsome membrane. It carries out the reaction an organic molecule + reduced [NADPH--hemoprotein reductase] + O2 = an alcohol + oxidized [NADPH--hemoprotein reductase] + H2O + H(+). Cytochromes P450 are a group of heme-thiolate monooxygenases. In liver microsomes, this enzyme is involved in an NADPH-dependent electron transport pathway. It oxidizes a variety of structurally unrelated compounds, including steroids, fatty acids, and xenobiotics. In Mus musculus (Mouse), this protein is Cytochrome P450 2D9 (Cyp2d9).